Reading from the N-terminus, the 941-residue chain is Isoleucine--tRNA ligase (941 aa).

A 'HIGH' region motif is present at residues 58–68 (PYANGDIHIGH). E563 contributes to the L-isoleucyl-5'-AMP binding site. The 'KMSKS' region signature appears at 604–608 (KMSKS). ATP is bound at residue K607. C904, C907, C924, and C927 together coordinate Zn(2+).

It belongs to the class-I aminoacyl-tRNA synthetase family. IleS type 1 subfamily. As to quaternary structure, monomer. It depends on Zn(2+) as a cofactor.

It is found in the cytoplasm. The enzyme catalyses tRNA(Ile) + L-isoleucine + ATP = L-isoleucyl-tRNA(Ile) + AMP + diphosphate. Functionally, catalyzes the attachment of isoleucine to tRNA(Ile). As IleRS can inadvertently accommodate and process structurally similar amino acids such as valine, to avoid such errors it has two additional distinct tRNA(Ile)-dependent editing activities. One activity is designated as 'pretransfer' editing and involves the hydrolysis of activated Val-AMP. The other activity is designated 'posttransfer' editing and involves deacylation of mischarged Val-tRNA(Ile). The chain is Isoleucine--tRNA ligase from Halorhodospira halophila (strain DSM 244 / SL1) (Ectothiorhodospira halophila (strain DSM 244 / SL1)).